Reading from the N-terminus, the 173-residue chain is Dual-action ribosomal maturation protein DarP (173 aa).

It belongs to the DarP family.

It localises to the cytoplasm. Member of a network of 50S ribosomal subunit biogenesis factors which assembles along the 30S-50S interface, preventing incorrect 23S rRNA structures from forming. Promotes peptidyl transferase center (PTC) maturation. In Pseudomonas entomophila (strain L48), this protein is Dual-action ribosomal maturation protein DarP.